The following is a 343-amino-acid chain: D-erythrose-4-phosphate dehydrogenase (343 aa).

12–13 (RI) is an NAD(+) binding site. Substrate contacts are provided by residues 154-156 (SCT), R200, 213-214 (TK), and R236. Catalysis depends on C155, which acts as the Nucleophile. N318 provides a ligand contact to NAD(+).

Belongs to the glyceraldehyde-3-phosphate dehydrogenase family. Epd subfamily. Homotetramer.

The protein resides in the cytoplasm. It catalyses the reaction D-erythrose 4-phosphate + NAD(+) + H2O = 4-phospho-D-erythronate + NADH + 2 H(+). It participates in cofactor biosynthesis; pyridoxine 5'-phosphate biosynthesis; pyridoxine 5'-phosphate from D-erythrose 4-phosphate: step 1/5. Catalyzes the NAD-dependent conversion of D-erythrose 4-phosphate to 4-phosphoerythronate. This is D-erythrose-4-phosphate dehydrogenase from Pseudoalteromonas translucida (strain TAC 125).